The sequence spans 334 residues: N-acetyl-gamma-glutamyl-phosphate reductase (334 aa).

The active site involves Cys154.

Belongs to the NAGSA dehydrogenase family. Type 1 subfamily.

It localises to the cytoplasm. The enzyme catalyses N-acetyl-L-glutamate 5-semialdehyde + phosphate + NADP(+) = N-acetyl-L-glutamyl 5-phosphate + NADPH + H(+). The protein operates within amino-acid biosynthesis; L-arginine biosynthesis; N(2)-acetyl-L-ornithine from L-glutamate: step 3/4. Its function is as follows. Catalyzes the NADPH-dependent reduction of N-acetyl-5-glutamyl phosphate to yield N-acetyl-L-glutamate 5-semialdehyde. The protein is N-acetyl-gamma-glutamyl-phosphate reductase of Vibrio vulnificus (strain YJ016).